The sequence spans 426 residues: Glutamate-1-semialdehyde 2,1-aminomutase (426 aa).

Position 265 is an N6-(pyridoxal phosphate)lysine (lysine 265).

It belongs to the class-III pyridoxal-phosphate-dependent aminotransferase family. HemL subfamily. In terms of assembly, homodimer. The cofactor is pyridoxal 5'-phosphate.

Its subcellular location is the cytoplasm. It catalyses the reaction (S)-4-amino-5-oxopentanoate = 5-aminolevulinate. It participates in porphyrin-containing compound metabolism; protoporphyrin-IX biosynthesis; 5-aminolevulinate from L-glutamyl-tRNA(Glu): step 2/2. This Pectobacterium atrosepticum (strain SCRI 1043 / ATCC BAA-672) (Erwinia carotovora subsp. atroseptica) protein is Glutamate-1-semialdehyde 2,1-aminomutase.